A 199-amino-acid chain; its full sequence is Recombination protein RecR (199 aa).

The C4-type zinc-finger motif lies at 58-73 (CSVCNNITDVDPCVFC). Positions 81 to 176 (RLVCVVEEPT…RLTRIATGVP (96 aa)) constitute a Toprim domain.

The protein belongs to the RecR family.

May play a role in DNA repair. It seems to be involved in an RecBC-independent recombinational process of DNA repair. It may act with RecF and RecO. This Acidobacterium capsulatum (strain ATCC 51196 / DSM 11244 / BCRC 80197 / JCM 7670 / NBRC 15755 / NCIMB 13165 / 161) protein is Recombination protein RecR.